The primary structure comprises 361 residues: UDP-3-O-acylglucosamine N-acyltransferase (361 aa).

H258 acts as the Proton acceptor in catalysis.

The protein belongs to the transferase hexapeptide repeat family. LpxD subfamily. As to quaternary structure, homotrimer.

It carries out the reaction a UDP-3-O-[(3R)-3-hydroxyacyl]-alpha-D-glucosamine + a (3R)-hydroxyacyl-[ACP] = a UDP-2-N,3-O-bis[(3R)-3-hydroxyacyl]-alpha-D-glucosamine + holo-[ACP] + H(+). It functions in the pathway bacterial outer membrane biogenesis; LPS lipid A biosynthesis. Catalyzes the N-acylation of UDP-3-O-acylglucosamine using 3-hydroxyacyl-ACP as the acyl donor. Is involved in the biosynthesis of lipid A, a phosphorylated glycolipid that anchors the lipopolysaccharide to the outer membrane of the cell. The sequence is that of UDP-3-O-acylglucosamine N-acyltransferase from Nitrobacter hamburgensis (strain DSM 10229 / NCIMB 13809 / X14).